Consider the following 475-residue polypeptide: Protein trichome birefringence-like 6 (475 aa).

Residues 14–34 (VLAFIITIISSAIVFFTFFSS) traverse the membrane as a helical; Signal-anchor for type II membrane protein segment. The short motif at 211 to 213 (GDS) is the GDS motif element. A DCXHWCLPGXXDXWN motif motif is present at residues 450–464 (DCSHWCLPGVPDTWN).

The protein belongs to the PC-esterase family. TBL subfamily.

It localises to the membrane. Functionally, may act as a bridging protein that binds pectin and other cell wall polysaccharides. Probably involved in maintaining esterification of pectins. May be involved in the specific O-acetylation of cell wall polymers. This Arabidopsis thaliana (Mouse-ear cress) protein is Protein trichome birefringence-like 6 (TBL6).